We begin with the raw amino-acid sequence, 189 residues long: Putative biopolymer transport protein ExbB-like 1 (189 aa).

Helical transmembrane passes span 14-34 (FVTT…LWVF), 99-119 (LVVL…GTVV), and 147-167 (LIAT…YLIL).

It belongs to the ExbB/TolQ family.

The protein localises to the cell inner membrane. The protein is Putative biopolymer transport protein ExbB-like 1 of Helicobacter pylori (strain ATCC 700392 / 26695) (Campylobacter pylori).